A 430-amino-acid polypeptide reads, in one-letter code: UPF0597 protein CV_1824 (430 aa).

This sequence belongs to the UPF0597 family.

In Chromobacterium violaceum (strain ATCC 12472 / DSM 30191 / JCM 1249 / CCUG 213 / NBRC 12614 / NCIMB 9131 / NCTC 9757 / MK), this protein is UPF0597 protein CV_1824.